A 1348-amino-acid polypeptide reads, in one-letter code: Vascular endothelial growth factor receptor 2 (1348 aa).

An N-terminal signal peptide occupies residues 1–20; that stretch reads MELGPLRVLTVLLCLAPVFA. Residues 21 to 756 are Extracellular-facing; the sequence is GLFISMDQPT…GAEEKTNLEL (736 aa). Residues asparagine 43, asparagine 47, asparagine 63, asparagine 93, asparagine 138, asparagine 153, asparagine 201, asparagine 240, asparagine 290, asparagine 310, asparagine 365, asparagine 386, asparagine 513, asparagine 556, asparagine 603, asparagine 613, asparagine 622, asparagine 666, asparagine 688, and asparagine 710 are each glycosylated (N-linked (GlcNAc...) asparagine). Ig-like C2-type domains lie at 43–106, 138–202, 220–312, 320–405, 412–534, 540–651, and 658–744; these read NDTL…GDSQ, NKTV…IDNE, DLTM…KNSS, PFIH…HTFT, PQIG…RVIS, GLEI…KHLT, and PRLV…AFFS. Cysteines 50 and 100 form a disulfide. The cysteines at positions 145 and 195 are disulfide-linked. A disulfide bridge connects residues cysteine 241 and cysteine 299. Residues cysteine 436 and cysteine 520 are joined by a disulfide bond. Cysteine 561 and cysteine 633 are oxidised to a cystine. A disulfide bridge connects residues cysteine 679 and cysteine 728. The helical transmembrane segment at 757 to 777 threads the bilayer; it reads IILVGTAVIAMFFWLLLVIIL. Residues 778–1348 lie on the Cytoplasmic side of the membrane; that stretch reads RTVKRANGGD…SPAPVASLPL (571 aa). Residues 825-1155 form the Protein kinase domain; the sequence is LKLGKPLGRG…FSELVEHLGN (331 aa). ATP contacts are provided by residues 831 to 839 and lysine 859; that span reads LGRGAFGQV. Positions 958–967 are enriched in low complexity; the sequence is ITSSQSSTSS. The segment at 958–983 is disordered; that stretch reads ITSSQSSTSSGFVEERSLSDVEEEDA. Residue aspartate 1021 is the Proton acceptor of the active site. Tyrosine 1047, tyrosine 1052, tyrosine 1168, and tyrosine 1207 each carry phosphotyrosine; by autocatalysis. Residues 1280 to 1302 are disordered; that stretch reads PSKSNESVMSEASNQTSGYQSGY.

The protein belongs to the protein kinase superfamily. Tyr protein kinase family. CSF-1/PDGF receptor subfamily. Post-translationally, autophosphorylated on tyrosine residues upon ligand binding. Autophosphorylation occurs in trans, i.e. one subunit of the dimeric receptor phosphorylates tyrosine residues on the other subunit. As to expression, in all endothelial tissues during onset of vascularization. In later development, present in lung, heart, intestine and skin.

It is found in the cell membrane. The protein resides in the cytoplasmic vesicle. Its subcellular location is the early endosome. It localises to the cell junction. The protein localises to the endoplasmic reticulum. It catalyses the reaction L-tyrosyl-[protein] + ATP = O-phospho-L-tyrosyl-[protein] + ADP + H(+). Its activity is regulated as follows. Present in an inactive conformation in the absence of bound ligand. Binding of VEGFA, VEGFC or VEGFD leads to dimerization and activation by autophosphorylation on tyrosine residues. Functionally, tyrosine-protein kinase that acts as a cell-surface receptor for VEGFA, VEGFC and/or VEGFD and plays an essential role in the regulation of angiogenesis and vascular development. Promotes proliferation, survival, migration and differentiation of endothelial cells. Promotes reorganization of the actin cytoskeleton. Binding of vascular growth factors leads to the activation of several signaling cascades. Activation of PLCG1 leads to the production of the cellular signaling molecules diacylglycerol and inositol 1,4,5-trisphosphate and the activation of protein kinase C. Mediates activation of MAPK1/ERK2, MAPK3/ERK1 and the MAP kinase signaling pathway, as well as of the AKT1 signaling pathway. Mediates phosphorylation of PIK3R1, the regulatory subunit of phosphatidylinositol 3-kinase, reorganization of the actin cytoskeleton and activation of PTK2/FAK1. Required for VEGFA-mediated induction of NOS2 and NOS3, leading to the production of the signaling molecule nitric oxide (NO) by endothelial cells. This is Vascular endothelial growth factor receptor 2 from Coturnix japonica (Japanese quail).